A 67-amino-acid polypeptide reads, in one-letter code: UPF0181 protein KPK_1966 (67 aa).

The segment at 48-67 is disordered; the sequence is EQIVARFEDEDEDQDEDEDD. The segment covering 55–67 has biased composition (acidic residues); the sequence is EDEDEDQDEDEDD.

It belongs to the UPF0181 family.

In Klebsiella pneumoniae (strain 342), this protein is UPF0181 protein KPK_1966.